Reading from the N-terminus, the 273-residue chain is Bifunctional protein FolD (273 aa).

NADP(+)-binding positions include 155–157 (GRS), S180, and T221.

This sequence belongs to the tetrahydrofolate dehydrogenase/cyclohydrolase family. In terms of assembly, homodimer.

It catalyses the reaction (6R)-5,10-methylene-5,6,7,8-tetrahydrofolate + NADP(+) = (6R)-5,10-methenyltetrahydrofolate + NADPH. The catalysed reaction is (6R)-5,10-methenyltetrahydrofolate + H2O = (6R)-10-formyltetrahydrofolate + H(+). It participates in one-carbon metabolism; tetrahydrofolate interconversion. Its function is as follows. Catalyzes the oxidation of 5,10-methylenetetrahydrofolate to 5,10-methenyltetrahydrofolate and then the hydrolysis of 5,10-methenyltetrahydrofolate to 10-formyltetrahydrofolate. This is Bifunctional protein FolD from Coprothermobacter proteolyticus (strain ATCC 35245 / DSM 5265 / OCM 4 / BT).